We begin with the raw amino-acid sequence, 1659 residues long: eIF-2-alpha kinase GCN2 (1659 aa).

The RWD domain maps to 17 to 128 (NELEAIRSIY…SFTQEKLDEF (112 aa)). A disordered region spans residues 149–170 (KEQLEKEEREKQQETIKKRSDE). 2 Protein kinase domains span residues 256–527 (LVKP…MKFL) and 599–981 (FEEI…SGWL). ATP-binding positions include 605–613 (LGQGAFGQV) and lysine 628. Disordered stretches follow at residues 671–691 (NVFESTDEESDLSESSSDFEE) and 727–768 (FENS…VPRR). Serine 761 is subject to Phosphoserine. Aspartate 835 functions as the Proton acceptor in the catalytic mechanism. 2 positions are modified to phosphothreonine; by autocatalysis: threonine 882 and threonine 887. Residues 999 to 1519 (NPSSPWQQQV…EFKRWDENSS (521 aa)) are histidyl-tRNA synthetase-like.

It belongs to the protein kinase superfamily. Ser/Thr protein kinase family. GCN2 subfamily. As to quaternary structure, homodimer; homodimerization is important for kinase activation by uncharged tRNAs. Interacts (via N-terminal RWD domain) with GCN1 (via N- and C-terminus); this interaction stimulates GCN2 kinase activity in a GCN20-dependent manner in response to amino acid starvation. Interacts (via N-terminus) with the GCN1-GCN20 complex on translating ribosomes in amino acid-starved cells; GCN1 may bind near the ribosomal A-site and promotes the transfer of uncharged tRNAs from the A-site to the tRNA-binding domain in GCN2 for its subsequent kinase activation, and hence allowing GCN4 translational activation and derepression of amino acid biosynthetic genes. Interacts (via C-terminus) with TIF11; this interaction is direct, occurs in amino acid-repleted cells, may be stabilized in a ribosome-dependent manner, reduces GCN2-mediated eIF-2-alpha phosphorylation but not GCN2 autophosphorylation and is lost in amino acid-starved cells and by uncharged tRNAs. Associates (via C-terminus) with ribosomes. Requires Mg(2+) as cofactor. In terms of processing, autophosphorylated, autophosphorylation on Thr-882 and Thr-887 increases kinase activity.

The protein resides in the cytoplasm. The enzyme catalyses L-seryl-[protein] + ATP = O-phospho-L-seryl-[protein] + ADP + H(+). The catalysed reaction is L-threonyl-[protein] + ATP = O-phospho-L-threonyl-[protein] + ADP + H(+). Its activity is regulated as follows. The integrated stress response (ISR) is activated in response to conditions that promote ribosome collisions: GCN1, which acts as a ribosome collision sensor, activates GCN2. The RQC pathway and the integrated stress response (ISR) antagonize each other: HEL2 prevents the activation of GCN2, while GCN2 suppresses RQC activation. Ribosome stalling-induced integrated stress response prefers ribosomes with empty A sites. The kinase activity is stimulated upon binding to uncharged tRNAs. Its function is as follows. Metabolic-stress sensing protein kinase that phosphorylates the alpha subunit of eukaryotic translation initiation factor 2 (eIF-2-alpha/SUI2) on 'Ser-52' in response to low amino acid, carbon, or purine availability. Required for adapatation to nutrient starvation by acting as a key component of the integrated stress response (ISR), by which cells alter their translational and transcriptional output in response to starvation. Converts phosphorylated eIF-2-alpha/SUI2 either to a competitive inhibitor of translation initiation factor eIF-2B, leading to a global protein synthesis repression, and thus to a reduced overall utilization of amino acids, or to a translational initiation activation of specific mRNAs, such as the transcriptional activator GCN4, and hence allowing GCN4-mediated reprogramming of transcription to alleviate nutrient depletion. Binds uncharged tRNAs. Binds to aminoacylated tRNA(Phe) less tightly than to deacylated tRNA(Phe). Binds to double-stranded RNA. The protein is eIF-2-alpha kinase GCN2 of Saccharomyces cerevisiae (strain ATCC 204508 / S288c) (Baker's yeast).